A 633-amino-acid chain; its full sequence is uncharacterized protein (633 aa).

The tract at residues 1 to 188 (MNNRGGFSHP…GQSSFYNSSY (188 aa)) is disordered. 2 stretches are compositionally biased toward low complexity: residues 32–80 (GQPQ…GGNN) and 104–148 (NNGN…TNSR). The span at 152–178 (RGGSSRGGSSRGGNSGSSRGGSRGGYR) shows a compositional bias: gly residues. The stretch at 580-607 (KSKNWTVDQASDELKKLSKNLRLLVSKH) forms a coiled coil. The segment at 611–633 (TKFQPPSADHTTQFEQDDEEEEN) is disordered.

This is an uncharacterized protein from Dictyostelium discoideum (Social amoeba).